The sequence spans 168 residues: ATP synthase subunit b (168 aa).

A helical membrane pass occupies residues 11-31 (NTVLGNIIVVSGAFIILLVLL).

The protein belongs to the ATPase B chain family. F-type ATPases have 2 components, F(1) - the catalytic core - and F(0) - the membrane proton channel. F(1) has five subunits: alpha(3), beta(3), gamma(1), delta(1), epsilon(1). F(0) has three main subunits: a(1), b(2) and c(10-14). The alpha and beta chains form an alternating ring which encloses part of the gamma chain. F(1) is attached to F(0) by a central stalk formed by the gamma and epsilon chains, while a peripheral stalk is formed by the delta and b chains.

Its subcellular location is the cell membrane. In terms of biological role, f(1)F(0) ATP synthase produces ATP from ADP in the presence of a proton or sodium gradient. F-type ATPases consist of two structural domains, F(1) containing the extramembraneous catalytic core and F(0) containing the membrane proton channel, linked together by a central stalk and a peripheral stalk. During catalysis, ATP synthesis in the catalytic domain of F(1) is coupled via a rotary mechanism of the central stalk subunits to proton translocation. Component of the F(0) channel, it forms part of the peripheral stalk, linking F(1) to F(0). The polypeptide is ATP synthase subunit b (Lactococcus lactis subsp. lactis (strain IL1403) (Streptococcus lactis)).